The sequence spans 388 residues: Beta-1,4-galactosyltransferase 5 (388 aa).

The Cytoplasmic portion of the chain corresponds to 1 to 14 (MRARRGLLRLPRRS). Residues 15-35 (LLAALFFFSLSSSLLYFVYVA) traverse the membrane as a helical; Signal-anchor for type II membrane protein segment. Residues 36 to 388 (PGIVNTYLFM…TPELAQVNEY (353 aa)) lie on the Lumenal side of the membrane. Asn77, Asn81, Asn90, Asn111, and Asn128 each carry an N-linked (GlcNAc...) asparagine glycan. Cysteines 114 and 158 form a disulfide. UDP-alpha-D-galactose-binding positions include 169-173 (PFRNR), 208-210 (FNR), 235-236 (VD), Tyr264, and Trp296. An intrachain disulfide couples Cys229 to Cys248. Asp236 contributes to the Mn(2+) binding site. Position 298–301 (298–301 (GEDD)) interacts with N-acetyl-D-glucosamine. His329 contacts Mn(2+). Residue 329–330 (HH) participates in UDP-alpha-D-galactose binding. Arg340 is an N-acetyl-D-glucosamine binding site. N-linked (GlcNAc...) asparagine glycosylation is found at Asn364 and Asn373.

Belongs to the glycosyltransferase 7 family. Mn(2+) serves as cofactor. Ubiquitously expressed.

Its subcellular location is the golgi apparatus. It is found in the golgi stack membrane. It carries out the reaction a beta-D-glucosyl-(1&lt;-&gt;1')-N-acylsphing-4-enine + UDP-alpha-D-galactose = a beta-D-Gal-(1-&gt;4)-beta-D-Glc-(1&lt;-&gt;1)-Cer(d18:1(4E)) + UDP + H(+). It participates in protein modification; protein glycosylation. Its pathway is sphingolipid metabolism. In terms of biological role, catalyzes the synthesis of lactosylceramide (LacCer) via the transfer of galactose from UDP-galactose to glucosylceramide (GlcCer). LacCer is the starting point in the biosynthesis of all gangliosides (membrane-bound glycosphingolipids) which play pivotal roles in the CNS including neuronal maturation and axonal and myelin formation. Plays a role in the glycosylation of BMPR1A and regulation of its protein stability. Essential for extraembryonic development during early embryogenesis. In Homo sapiens (Human), this protein is Beta-1,4-galactosyltransferase 5.